The primary structure comprises 165 residues: uncharacterized protein (165 aa).

The Cupin type-1 domain maps to 28–139; that stretch reads QNALKDTGLA…KPNEREEAVK (112 aa).

This is an uncharacterized protein from Bacillus subtilis (strain 168).